A 230-amino-acid chain; its full sequence is UPF0758 protein ABC2615 (230 aa).

The MPN domain maps to V104–F226. Zn(2+) contacts are provided by H175, H177, and D188. The JAMM motif signature appears at H175–D188.

The protein belongs to the UPF0758 family.

The chain is UPF0758 protein ABC2615 from Shouchella clausii (strain KSM-K16) (Alkalihalobacillus clausii).